The sequence spans 210 residues: Urease accessory protein UreG (210 aa).

14 to 21 (GPVGSGKT) serves as a coordination point for GTP.

The protein belongs to the SIMIBI class G3E GTPase family. UreG subfamily. In terms of assembly, homodimer. UreD, UreF and UreG form a complex that acts as a GTP-hydrolysis-dependent molecular chaperone, activating the urease apoprotein by helping to assemble the nickel containing metallocenter of UreC. The UreE protein probably delivers the nickel.

It localises to the cytoplasm. Facilitates the functional incorporation of the urease nickel metallocenter. This process requires GTP hydrolysis, probably effectuated by UreG. This Rhodopseudomonas palustris (strain BisA53) protein is Urease accessory protein UreG.